A 222-amino-acid polypeptide reads, in one-letter code: Pyrrolidone-carboxylate peptidase (222 aa).

Active-site residues include Glu-80, Cys-146, and His-170.

This sequence belongs to the peptidase C15 family. In terms of assembly, homotetramer.

It localises to the cytoplasm. It carries out the reaction Release of an N-terminal pyroglutamyl group from a polypeptide, the second amino acid generally not being Pro.. In terms of biological role, removes 5-oxoproline from various penultimate amino acid residues except L-proline. In Mycobacterium marinum (strain ATCC BAA-535 / M), this protein is Pyrrolidone-carboxylate peptidase.